The chain runs to 222 residues: Transcriptional regulatory protein BasR (222 aa).

A Response regulatory domain is found at Lys-2–Leu-116. Residue Asp-51 is modified to 4-aspartylphosphate. Positions Glu-124–Ala-218 form a DNA-binding region, ompR/PhoB-type.

As to quaternary structure, homodimer. In terms of processing, phosphorylated by BasS.

The protein localises to the cytoplasm. Functionally, member of the two-component regulatory system BasS/BasR. BasR induces the transcription of the ugd, ais, arnBCADTEF and eptA-basRS loci, all involved in resistance to polymyxin. This chain is Transcriptional regulatory protein BasR (basR), found in Escherichia coli (strain K12).